The sequence spans 256 residues: 6-carboxyhexanoate--CoA ligase (256 aa).

It belongs to the BioW family. Homodimer. Requires Mg(2+) as cofactor.

It catalyses the reaction heptanedioate + ATP + CoA = 6-carboxyhexanoyl-CoA + AMP + diphosphate. Its pathway is metabolic intermediate metabolism; pimeloyl-CoA biosynthesis; pimeloyl-CoA from pimelate: step 1/1. In terms of biological role, catalyzes the transformation of pimelate into pimeloyl-CoA with concomitant hydrolysis of ATP to AMP. The protein is 6-carboxyhexanoate--CoA ligase of Methanobrevibacter ruminantium (strain ATCC 35063 / DSM 1093 / JCM 13430 / OCM 146 / M1) (Methanobacterium ruminantium).